The sequence spans 1483 residues: Chromosome partition protein MukB (1483 aa).

An ATP-binding site is contributed by 34–41 (GGNGAGKS). 2 coiled-coil regions span residues 311–426 (EMAR…LQRA) and 547–607 (GQQV…WLAA). The flexible hinge stretch occupies residues 666–783 (PGGSEDARLN…KVPLFGRAAR (118 aa)). 2 coiled-coil regions span residues 835-1115 (EAAL…SAKA) and 1206-1266 (DDPV…QAVS). A disordered region spans residues 850–870 (RELNNHESENQQQRQQYEQAK).

It belongs to the SMC family. MukB subfamily. As to quaternary structure, homodimerization via its hinge domain. Binds to DNA via its C-terminal region. Interacts, and probably forms a ternary complex, with MukE and MukF via its C-terminal region. The complex formation is stimulated by calcium or magnesium. Interacts with tubulin-related protein FtsZ.

It is found in the cytoplasm. The protein localises to the nucleoid. Its function is as follows. Plays a central role in chromosome condensation, segregation and cell cycle progression. Functions as a homodimer, which is essential for chromosome partition. Involved in negative DNA supercoiling in vivo, and by this means organize and compact chromosomes. May achieve or facilitate chromosome segregation by condensation DNA from both sides of a centrally located replisome during cell division. The polypeptide is Chromosome partition protein MukB (Erwinia tasmaniensis (strain DSM 17950 / CFBP 7177 / CIP 109463 / NCPPB 4357 / Et1/99)).